A 398-amino-acid chain; its full sequence is uncharacterized protein (398 aa).

The protein belongs to the class-V pyridoxal-phosphate-dependent aminotransferase family. Homodimer.

Its function is as follows. Is essential for optimal growth. This is an uncharacterized protein from Mycobacterium tuberculosis (strain CDC 1551 / Oshkosh).